Reading from the N-terminus, the 239-residue chain is MTIYLPELIPSHSTVFPNIENALNNPDGLLIMGGDLSSAQLISAYQHGIFPWYSDGDPILWWSPSVRGVFFPEQFSPSKSLKKFFRKSNYNVTLNKATYQVIDLCASTRPKEETWIMPEMIKAYKTLVDLGYCHSVEVWNDNELIGGLYGLQIGQVFCGESMFSLQTNASKIALWKFCEHFVSSNGKLIDCQMMNPHLESLGAQEMKRSDFKTLLEELHVKPTSSDCYLAQTLGGSSFS.

Belongs to the L/F-transferase family.

It is found in the cytoplasm. The catalysed reaction is N-terminal L-lysyl-[protein] + L-leucyl-tRNA(Leu) = N-terminal L-leucyl-L-lysyl-[protein] + tRNA(Leu) + H(+). It catalyses the reaction N-terminal L-arginyl-[protein] + L-leucyl-tRNA(Leu) = N-terminal L-leucyl-L-arginyl-[protein] + tRNA(Leu) + H(+). It carries out the reaction L-phenylalanyl-tRNA(Phe) + an N-terminal L-alpha-aminoacyl-[protein] = an N-terminal L-phenylalanyl-L-alpha-aminoacyl-[protein] + tRNA(Phe). Functions in the N-end rule pathway of protein degradation where it conjugates Leu, Phe and, less efficiently, Met from aminoacyl-tRNAs to the N-termini of proteins containing an N-terminal arginine or lysine. The protein is Leucyl/phenylalanyl-tRNA--protein transferase of Aliivibrio fischeri (strain MJ11) (Vibrio fischeri).